A 441-amino-acid polypeptide reads, in one-letter code: Nucleoprotein (441 aa).

Ser-5 carries the phosphoserine; by host modification. The 123-residue stretch at 14 to 136 (VPLSLYAPLR…QLPSVVEIVE (123 aa)) folds into the CoV N NTD domain. The tract at residues 16 to 146 (LSLYAPLRVT…PNTPPASRAN (131 aa)) is RNA-binding. Disordered stretches follow at residues 131–219 (VVEI…VTSR) and 231–278 (KSLG…LKDI). Phosphoserine; by host is present on Ser-143. The segment covering 143-215 (SRANSRSRSR…NRNQSNDRGG (73 aa)) has biased composition (low complexity). Basic and acidic residues-rich tracts occupy residues 238 to 255 (NPDR…KSDN) and 269 to 278 (TSKERDLKDI). Residues 266 to 382 (SRATSKERDL…AFKTGNAKLQ (117 aa)) form the CoV N CTD domain. Residues 277 to 379 (DIPEWRRIPK…QVDAFKTGNA (103 aa)) form a dimerization region.

The protein belongs to the alphacoronavirus nucleocapsid protein family. As to quaternary structure, homooligomer. Both monomeric and oligomeric forms interact with RNA. Interacts with protein M. Interacts with NSP3; this interaction serves to tether the genome to the newly translated replicase-transcriptase complex at a very early stage of infection. Interacts with host RSAD2; this interaction inhibits viral replication. Post-translationally, ADP-ribosylated. The ADP-ribosylation is retained in the virion during infection. Phosphorylated on serine and threonine residues.

It is found in the virion. The protein localises to the host endoplasmic reticulum-Golgi intermediate compartment. The protein resides in the host Golgi apparatus. In terms of biological role, packages the positive strand viral genome RNA into a helical ribonucleocapsid (RNP) and plays a fundamental role during virion assembly through its interactions with the viral genome and membrane protein M. Plays an important role in enhancing the efficiency of subgenomic viral RNA transcription as well as viral replication. The protein is Nucleoprotein of Porcine epidemic diarrhea virus (strain CV777) (PEDV).